The chain runs to 610 residues: tRNA uridine 5-carboxymethylaminomethyl modification enzyme MnmG (610 aa).

14–19 provides a ligand contact to FAD; that stretch reads GAGHAG. 274-288 is a binding site for NAD(+); it reads GPRYCPSIEDKIVKF.

It belongs to the MnmG family. In terms of assembly, homodimer. Heterotetramer of two MnmE and two MnmG subunits. The cofactor is FAD.

It is found in the cytoplasm. NAD-binding protein involved in the addition of a carboxymethylaminomethyl (cmnm) group at the wobble position (U34) of certain tRNAs, forming tRNA-cmnm(5)s(2)U34. In Chlamydia trachomatis serovar D (strain ATCC VR-885 / DSM 19411 / UW-3/Cx), this protein is tRNA uridine 5-carboxymethylaminomethyl modification enzyme MnmG.